A 28-amino-acid polypeptide reads, in one-letter code: NU-theraphotoxin-Preg1a (28 aa).

3 cysteine pairs are disulfide-bonded: Cys-2–Cys-19, Cys-9–Cys-22, and Cys-18–Cys-27.

As to expression, expressed by the venom gland.

The protein localises to the secreted. Toxin that acts as an agonist on melanocortin receptors (MC1R, MC3R, MC5R, MC5R). After binding to MC1R, the peptide activates the hMC1R/Gs pathway, but after binding to MC4R, it is not able to activate or antagonize the MC4R/Gs pathway. Inhibits melanocyte stimulating hormone (MSH)-binding to human receptors (Ki=1.8 uM to MC1R, Ki=19.8 uM to MC3R, Ki=7.1 uM to MC4R, Ki=10.0 uM to MC5R). This toxin is structurally unrelated to the natural agonists. The protein is NU-theraphotoxin-Preg1a of Poecilotheria regalis (Indian ornamental tree spider).